Reading from the N-terminus, the 282-residue chain is Protein N-terminal and lysine N-methyltransferase efm7 (282 aa).

Residues 1–13 (MSKPEEVVNHVPE) show a composition bias toward basic and acidic residues. The segment at 1 to 32 (MSKPEEVVNHVPEDEGSDIEAGGLFEDPPDFY) is disordered. S-adenosyl-L-methionine-binding positions include Trp67, 93–95 (GAA), Asp115, Trp152, and Ala179.

The protein belongs to the class I-like SAM-binding methyltransferase superfamily. EFM7 family.

It is found in the cytoplasm. Functionally, S-adenosyl-L-methionine-dependent protein methyltransferase that trimethylates the N-terminal glycine 'Gly-2' of elongation factor 1-alpha, before also catalyzing the mono- and dimethylation of 'Lys-3'. In Neurospora crassa (strain ATCC 24698 / 74-OR23-1A / CBS 708.71 / DSM 1257 / FGSC 987), this protein is Protein N-terminal and lysine N-methyltransferase efm7 (nnt-1).